A 675-amino-acid chain; its full sequence is G-protein-signaling modulator 1 (675 aa).

Positions 1–509 (MAGPAPPVAD…DLLTKFQSSR (509 aa)) are mediates association with membranes. TPR repeat units lie at residues 28-61 (CLEL…GTED), 66-99 (SAIY…ARTI), 106-139 (AKAS…AQEQ), 146-181 (ARAL…PPDV), 183-202 (ETLC…VKEL), 209-242 (GRAY…AKEF), 249-282 (RRAY…SRQL), 289-322 (AQAC…AQEL), and 329-362 (GRAC…SQEI). Residues 364 to 487 (DRHGELTARM…VRVHVPRTSI (124 aa)) are interaction with STK11/LKB1. Residues 391–412 (SEKPDLAGYEAQGARPKRTQRL) are disordered. Ser413 carries the post-translational modification Phosphoserine. Arg421 is modified (omega-N-methylarginine). Positions 424 to 442 (LEREQNGDSHHSGDWRGPS) are enriched in basic and acidic residues. Residues 424 to 492 (LEREQNGDSH…PRTSIPRAPS (69 aa)) are disordered. Residues Ser445, Ser469, Ser471, Ser492, and Ser493 each carry the phosphoserine modification. A compositionally biased stretch (basic and acidic residues) spans 454–469 (KYQEGPDAERRPREGS). One can recognise a GoLoco 1 domain in the interval 495 to 517 (EECFFDLLTKFQSSRMDDQRCPL). 2 positions are modified to phosphoserine: Ser545 and Ser569. GoLoco domains follow at residues 548-570 (TEEF…RASV), 596-618 (GDDF…RCPP), and 630-652 (DEDF…RVDL). Disordered stretches follow at residues 610 to 630 (RIDD…TMPD) and 644 to 675 (RMDE…PGAS).

Belongs to the GPSM family. As to quaternary structure, interacts with GNAI1, GNAI2 and GNAI3 preferentially in their GDP-bound state. May also interact with GNAO1. Interacts with STK11/LKB1 and MACF1. Interacts with INSC/inscuteable and FRMPD1. Post-translationally, phosphorylation regulates interaction with G(i/o) alpha. In terms of tissue distribution, expressed in intestinal cells.

It is found in the cytoplasm. Its subcellular location is the cytosol. The protein resides in the endoplasmic reticulum membrane. The protein localises to the golgi apparatus membrane. It localises to the cell membrane. Functionally, guanine nucleotide dissociation inhibitor (GDI) which functions as a receptor-independent activator of heterotrimeric G-protein signaling. Keeps G(i/o) alpha subunit in its GDP-bound form thus uncoupling heterotrimeric G-proteins signaling from G protein-coupled receptors. Controls spindle orientation and asymmetric cell fate of cerebral cortical progenitors. May also be involved in macroautophagy in intestinal cells. May play a role in drug addiction. This Homo sapiens (Human) protein is G-protein-signaling modulator 1 (GPSM1).